The following is a 412-amino-acid chain: Light-independent protochlorophyllide reductase subunit N (412 aa).

Cys-16, Cys-41, and Cys-102 together coordinate [4Fe-4S] cluster.

The protein belongs to the BchN/ChlN family. Protochlorophyllide reductase is composed of three subunits; ChlL, ChlN and ChlB. Forms a heterotetramer of two ChlB and two ChlN subunits. It depends on [4Fe-4S] cluster as a cofactor.

It catalyses the reaction chlorophyllide a + oxidized 2[4Fe-4S]-[ferredoxin] + 2 ADP + 2 phosphate = protochlorophyllide a + reduced 2[4Fe-4S]-[ferredoxin] + 2 ATP + 2 H2O. Its pathway is porphyrin-containing compound metabolism; chlorophyll biosynthesis (light-independent). Component of the dark-operative protochlorophyllide reductase (DPOR) that uses Mg-ATP and reduced ferredoxin to reduce ring D of protochlorophyllide (Pchlide) to form chlorophyllide a (Chlide). This reaction is light-independent. The NB-protein (ChlN-ChlB) is the catalytic component of the complex. This is Light-independent protochlorophyllide reductase subunit N from Synechococcus sp. (strain RCC307).